The chain runs to 238 residues: Protein lifeguard 4 (238 aa).

The Cytoplasmic segment spans residues 1-38 (MADTDPGYPRSSIEDDFNYGSCVASASVHIRMAFLRKV). The helical transmembrane segment at 39–59 (YSILSLQVLLTTVTSALFLYF) threads the bilayer. Topologically, residues 60–68 (QALRTFVHE) are lumenal. The chain crosses the membrane as a helical span at residues 69–89 (SPALIVVFALGSLGLIFALTL). Residues 90–97 (HRHTHPLN) lie on the Cytoplasmic side of the membrane. Residues 98 to 118 (LYLLFAFTLSESLAVAAVVTF) form a helical membrane-spanning segment. Residues 119-120 (YD) lie on the Lumenal side of the membrane. The chain crosses the membrane as a helical span at residues 121-141 (VYLVLQAFIMTTAVFLGLTAY). The Cytoplasmic segment spans residues 142 to 151 (TLQSKRDFTK). The helical transmembrane segment at 152 to 172 (FGAGLFAGLWILCLAGFLKLF) threads the bilayer. Residues 173 to 175 (FYS) are Lumenal-facing. A helical membrane pass occupies residues 176–196 (ETMELVLASLGALLFCGFIIY). Over 197–208 (DTHSLMHRLSPE) the chain is Cytoplasmic. Residues 209–229 (EYVIAAISLYMDIINLFLHLL) constitute an intramembrane region (helical). Residues 230–238 (KFLEAVNKK) lie on the Cytoplasmic side of the membrane.

Belongs to the BI1 family. LFG subfamily. As to quaternary structure, interacts with ITPR3.

The protein localises to the golgi apparatus membrane. Anti-apoptotic protein which can inhibit apoptosis induced by intrinsic and extrinsic apoptotic stimuli. Can modulate both capacitative Ca2+ entry and inositol 1,4,5-trisphosphate (IP3)-mediated Ca2+ release. This is Protein lifeguard 4 (Tmbim4) from Mus musculus (Mouse).